Reading from the N-terminus, the 146-residue chain is NADH-ubiquinone oxidoreductase chain 6 (146 aa).

Helical transmembrane passes span 10–30 (ILAI…LLFV), 43–63 (LMGI…FLFI), 81–101 (VIVL…PIAI), and 124–144 (APML…AIAM).

This sequence belongs to the complex I subunit 6 family.

Its subcellular location is the mitochondrion membrane. It catalyses the reaction a ubiquinone + NADH + 5 H(+)(in) = a ubiquinol + NAD(+) + 4 H(+)(out). Its function is as follows. Core subunit of the mitochondrial membrane respiratory chain NADH dehydrogenase (Complex I) that is believed to belong to the minimal assembly required for catalysis. Complex I functions in the transfer of electrons from NADH to the respiratory chain. The immediate electron acceptor for the enzyme is believed to be ubiquinone. The protein is NADH-ubiquinone oxidoreductase chain 6 (NAD6) of Candida albicans (strain SC5314 / ATCC MYA-2876) (Yeast).